A 103-amino-acid polypeptide reads, in one-letter code: Large ribosomal subunit protein bL21 (103 aa).

It belongs to the bacterial ribosomal protein bL21 family. In terms of assembly, part of the 50S ribosomal subunit. Contacts protein L20.

Functionally, this protein binds to 23S rRNA in the presence of protein L20. The sequence is that of Large ribosomal subunit protein bL21 from Thermobifida fusca (strain YX).